The sequence spans 470 residues: Mucin-like protein 3 (470 aa).

An N-terminal signal peptide occupies residues 1–29; the sequence is MAQMTSGLYPMFGFFICLLFLPASWEAGA. The Extracellular portion of the chain corresponds to 30–401; it reads NTFQELQKTG…EGSNSFPAWA (372 aa). Disordered stretches follow at residues 57-234 and 248-318; these read RALS…HTIP and TKEA…KAPE. Positions 75–87 are enriched in polar residues; it reads STATQKPKRQCNT. N-linked (GlcNAc...) asparagine glycosylation occurs at N122. The span at 132 to 152 shows a compositional bias: basic and acidic residues; it reads ARNERSADDHGSTNSEKRSDG. The segment covering 169-193 has biased composition (polar residues); the sequence is TRTSGTPVSSTETSTKLRTTSQKPE. Basic and acidic residues predominate over residues 194–203; that stretch reads TSSHDSDLIR. Residues 204–222 show a composition bias toward polar residues; that stretch reads KSTSLPVKSTEVSRTSYRT. Over residues 260 to 273 the composition is skewed to basic and acidic residues; the sequence is KYERETRSASERIS. Over residues 283 to 295 the composition is skewed to polar residues; it reads HTPSAGETTTQVS. N-linked (GlcNAc...) asparagine glycosylation is present at N325. The helical transmembrane segment at 402–422 threads the bilayer; it reads IVVVILMAVIILLIFLGLIFL. At 423-470 the chain is on the cytoplasmic side; sequence VSCASRARHQLTQNSEDAEPEDKGGRNSYPVYLMEQQNLNLNQISSPP.

The protein resides in the cell membrane. It localises to the cytoplasm. Functionally, may modulate NF-kappaB signaling and play a role in cell growth. This chain is Mucin-like protein 3, found in Rattus norvegicus (Rat).